The following is a 180-amino-acid chain: NADH-quinone oxidoreductase subunit I (180 aa).

4Fe-4S ferredoxin-type domains are found at residues 50-80 (LTRNIDGQERCVACNLCAVVCPVDCISLQKS) and 90-119 (KFFRINFSRCIFCGLCEEACPTAAIQLMPD). [4Fe-4S] cluster-binding residues include C60, C63, C66, C70, C99, C102, C105, and C109.

Belongs to the complex I 23 kDa subunit family. In terms of assembly, NDH-1 is composed of 13 different subunits. Subunits NuoA, H, J, K, L, M, N constitute the membrane sector of the complex. [4Fe-4S] cluster is required as a cofactor.

The protein resides in the cell membrane. The enzyme catalyses a quinone + NADH + 5 H(+)(in) = a quinol + NAD(+) + 4 H(+)(out). Functionally, NDH-1 shuttles electrons from NADH, via FMN and iron-sulfur (Fe-S) centers, to quinones in the respiratory chain. The immediate electron acceptor for the enzyme in this species is believed to be ubiquinone. Couples the redox reaction to proton translocation (for every two electrons transferred, four hydrogen ions are translocated across the cytoplasmic membrane), and thus conserves the redox energy in a proton gradient. The protein is NADH-quinone oxidoreductase subunit I of Buchnera aphidicola subsp. Acyrthosiphon pisum (strain APS) (Acyrthosiphon pisum symbiotic bacterium).